The primary structure comprises 253 residues: Sortase SrtE2 (253 aa).

A compositionally biased stretch (basic and acidic residues) spans 1–11; sequence MAATTDTEHQE. The disordered stretch occupies residues 1–23; the sequence is MAATTDTEHQEQAGTGGRGRRRP. A helical membrane pass occupies residues 30–50; that stretch reads AVSVLGELLITAGLVMGLFVV. The interval 69–89 is disordered; the sequence is EKVRDDWAQDRVGGSGQDGPG. Cysteine 220 is an active-site residue.

The protein belongs to the bacterial sortase family. Class E subfamily.

Its subcellular location is the cell membrane. It catalyses the reaction The enzyme catalyzes a cell wall sorting reaction in which a surface protein with a sorting signal containing a LPXTG motif is cleaved between the Thr and Gly residue. The resulting threonine carboxyl end of the protein is covalently attached to a pentaglycine cross-bridge of peptidoglycan.. Transpeptidase that anchors surface proteins to the cell wall. Recognizes Leu-Ala-x-Thr-Gly and Leu-Pro-x-Thr-Gly, with a preference for the former. Unlike the S.aureus sortase it cleaves not only the Thr-Gly motif but also the Ala-X bond; an Ala-Glu bond is a better substrate than the Thr-Gly motif in vitro. Among its possible substrates are the chaplins ChpA, ChpB and ChpC; this enzyme is more important for ChpC attachment than is SrtE1. A double knockout mutant of srtE1 and srtE2 shows a developmental defect in aerial hyphae formation more dramatic than that due to chaplin deletion. The polypeptide is Sortase SrtE2 (Streptomyces coelicolor (strain ATCC BAA-471 / A3(2) / M145)).